A 359-amino-acid polypeptide reads, in one-letter code: MWRPSISNCVWSTLLLAIFVQQTLAQRTPTISYITQEQIKDIGGTVEFDCSVQYAKEYNVLFLKTDSDPVFLSTGSTLVIKDSRFSLRYDPNSSTYKLQIKDIQETDAGTYTCQVVISTVHKVSAEVKLSVRRPPVISDNSTQSVVASEGSEVQMECYASGYPTPTITWRRENNAILPTDSATYVGNTLRIKSVKKEDRGTYYCVADNGVSKGDRRNINVEVEFAPVITVPRPRLGQALQYDMDLECHIEAYPPPAIVWTKDDIQLANNQHYSISHFATADEYTDSTLRVITVEKRQYGDYVCKATNRFGEAEARVNLFETIIPVCPPACGQAYIAGAEDVSATSFALVGILAALLFAR.

Positions 1–25 are cleaved as a signal peptide; that stretch reads MWRPSISNCVWSTLLLAIFVQQTLA. The Ig-like V-type domain maps to 29–130; that stretch reads PTISYITQEQ…HKVSAEVKLS (102 aa). A disulfide bond links C50 and C113. 2 N-linked (GlcNAc...) asparagine glycosylation sites follow: N92 and N140. Ig-like C2-type domains lie at 135-221 and 226-317; these read PVIS…INVE and PVIT…ARVN. Intrachain disulfides connect C157/C204 and C247/C303. A336 is lipidated: GPI-anchor amidated alanine. A propeptide spans 337–359 (removed in mature form); sequence GAEDVSATSFALVGILAALLFAR.

As to expression, expressed on differentiating neuronal cells from the onset of neurogenesis in both the central and peripheral nervous systems. First detected in the cellularized blastoderm, apart from in the ventral side. Expression persists uniformly in the early ectoderm until the end of gastrulation. From stage 10, expressed in an alternating strong/weak pattern in each segment until stage 15 when it disappears. From stage 11, expressed in subsets of neurons and later subsets of glial cells. From early stage 13, strongly expressed in trachea, hindgut, foregut and the nervous system.

Its subcellular location is the cell membrane. Functionally, required for normal tracheal development and maintenance of the trans-epithelial diffusion barrier. Functions as a homophilic cell-adhesion molecule. May play a role in early neuronal differentiation and axon outgrowth. The sequence is that of Lachesin (Lac) from Drosophila melanogaster (Fruit fly).